The primary structure comprises 540 residues: Chaperonin GroEL (540 aa).

Residues 29–32 (TLGP), 86–90 (DGTTT), Gly-413, 476–478 (NAA), and Asp-492 each bind ATP.

This sequence belongs to the chaperonin (HSP60) family. Forms a cylinder of 14 subunits composed of two heptameric rings stacked back-to-back. Interacts with the co-chaperonin GroES.

The protein localises to the cytoplasm. It carries out the reaction ATP + H2O + a folded polypeptide = ADP + phosphate + an unfolded polypeptide.. In terms of biological role, together with its co-chaperonin GroES, plays an essential role in assisting protein folding. The GroEL-GroES system forms a nano-cage that allows encapsulation of the non-native substrate proteins and provides a physical environment optimized to promote and accelerate protein folding. The polypeptide is Chaperonin GroEL (Streptococcus constellatus).